An 87-amino-acid polypeptide reads, in one-letter code: Virulence protein PagD (87 aa).

Residues 1–20 (MKHHAFMLWSLLIFSFHVLA) form the signal peptide. The disordered stretch occupies residues 46–87 (QPPTNTDKKQARQISSPSCPTTKPMMSAPVNDARKGNTFSRT). Polar residues predominate over residues 57 to 66 (RQISSPSCPT).

In terms of biological role, putative function in virulence. Could be involved in promoting S.typhimurium survival within macrophages. This Salmonella typhimurium (strain LT2 / SGSC1412 / ATCC 700720) protein is Virulence protein PagD (pagD).